We begin with the raw amino-acid sequence, 1164 residues long: DNA-directed RNA polymerase subunit beta (1164 aa).

Disordered stretches follow at residues 975–994 and 1143–1164; these read RSSLPNRDGERQVDDFGKSN and ANAALGINLSRDERPDADMDVS. 2 stretches are compositionally biased toward basic and acidic residues: residues 981 to 991 and 1152 to 1164; these read RDGERQVDDFG and SRDERPDADMDVS.

This sequence belongs to the RNA polymerase beta chain family. In terms of assembly, the RNAP catalytic core consists of 2 alpha, 1 beta, 1 beta' and 1 omega subunit. When a sigma factor is associated with the core the holoenzyme is formed, which can initiate transcription.

The catalysed reaction is RNA(n) + a ribonucleoside 5'-triphosphate = RNA(n+1) + diphosphate. Functionally, DNA-dependent RNA polymerase catalyzes the transcription of DNA into RNA using the four ribonucleoside triphosphates as substrates. The protein is DNA-directed RNA polymerase subunit beta of Corynebacterium jeikeium (strain K411).